The primary structure comprises 372 residues: Envelope phospholipase OPG057 (372 aa).

The YPPL motif lies at 153–156 (YPPL). Residues Cys185 and Cys186 are each lipidated (S-palmitoyl cysteine; by host). The PLD phosphodiesterase domain occupies 307–334 (FTIQNNTKLLIVDDEYVHITSANFDGTH).

The protein belongs to the orthopoxvirus OPG057 family. In terms of assembly, interacts with protein OPG190. In terms of processing, palmitoylated. Attachment of the palmitate moiety is essential for correct intracellular targeting and protein function.

The protein resides in the virion membrane. Its subcellular location is the host Golgi apparatus. It is found in the host trans-Golgi network. The protein localises to the host endoplasmic reticulum membrane. It carries out the reaction a 1,2-diacyl-sn-glycero-3-phosphocholine + H2O = a 1,2-diacyl-sn-glycero-3-phosphate + choline + H(+). Major envelope protein that plays a role in the biogenesis of the viral double membrane and in egress of virus from the host cell. Produces the wrapped form of virus that is required for cell-to-cell spread. Acts as a lipase with broad specificity including phospholipase C, phospholipase A, and triacylglycerol lipase activities. This Vaccinia virus (strain Copenhagen) (VACV) protein is Envelope phospholipase OPG057 (OPG057).